A 1057-amino-acid chain; its full sequence is Outer capsid protein VP2 (1057 aa).

Belongs to the orbivirus VP2 family.

The protein resides in the virion. Its function is as follows. The VP2 protein is one of the two proteins (with VP5) which constitute the virus particle outer capsid. It is the major target of the host immunogenic response. This Anas (ducks) protein is Outer capsid protein VP2 (Segment-2).